We begin with the raw amino-acid sequence, 355 residues long: Aromatic amino acid aminotransferase (355 aa).

Position 217 is an N6-(pyridoxal phosphate)lysine (lysine 217).

The protein belongs to the class-II pyridoxal-phosphate-dependent aminotransferase family. As to quaternary structure, homodimer. Requires pyridoxal 5'-phosphate as cofactor.

The catalysed reaction is an aromatic L-alpha-amino acid + 2-oxoglutarate = an aromatic oxo-acid + L-glutamate. Its function is as follows. Aminotransferase that catalyzes the conversion of aromatic amino acids and 2-oxoglutarate into corresponding aromatic oxo acids and L-glutamate. The chain is Aromatic amino acid aminotransferase from Mycolicibacterium paratuberculosis (strain ATCC BAA-968 / K-10) (Mycobacterium paratuberculosis).